Consider the following 845-residue polypeptide: Putative DEAD-box ATP-dependent RNA helicase 29 (845 aa).

A Q motif motif is present at residues 28-56 (GGFESLNLGPNVFNAIKKKGYKVPTPIQR). The Helicase ATP-binding domain maps to 59-232 (MPLILSGVDV…KAGLREPQLV (174 aa)). 72-79 (ARTGSGKT) contributes to the ATP binding site. A DEAD box motif is present at residues 180–183 (DEAD). A Helicase C-terminal domain is found at 256-411 (KYSALLYLVR…EVLKNMEEVM (156 aa)). The tract at residues 675–845 (SGKIKTESGA…GGGGKRGRGR (171 aa)) is disordered. Composition is skewed to basic and acidic residues over residues 696 to 716 (RWQERSHKKVSRDSGDADETT) and 738 to 754 (VRSEIKDLDQVRKERQQ). A compositionally biased stretch (gly residues) spans 770–799 (GGRGGARGGRGGGARGGRGGSRDFGGGGRD). Over residues 806–817 (RGGRSGGRDFGG) the composition is skewed to basic and acidic residues. Basic residues predominate over residues 828 to 845 (GGKRGGGRGGGGKRGRGR).

Belongs to the DEAD box helicase family. DDX54/DBP10 subfamily.

It catalyses the reaction ATP + H2O = ADP + phosphate + H(+). The chain is Putative DEAD-box ATP-dependent RNA helicase 29 (RH29) from Arabidopsis thaliana (Mouse-ear cress).